A 278-amino-acid chain; its full sequence is Non-heme chloroperoxidase (278 aa).

Residues 26 to 264 (PVVLIHGFPL…GAPHGLLWTH (239 aa)) enclose the AB hydrolase-1 domain. Catalysis depends on residues S99, D229, and H258.

It belongs to the AB hydrolase superfamily. Bacterial non-heme haloperoxidase / perhydrolase family. As to quaternary structure, homodimer.

This Kitasatospora aureofaciens (Streptomyces aureofaciens) protein is Non-heme chloroperoxidase (cpo).